Consider the following 210-residue polypeptide: MYDFEPKMNALVPMVIEQTNRGERGYDIYSRLLKERIIFLIGGVNDAVASLICSQLLFLESENPSKDIALYINSPGGYVSAGLAIYDTMQYIRPQVSTVCMGQAASMGSLLLAAGAPGKRFSLPNSRIMIHQPSGGAQGQASDIEIQAQEILKLRSRLNDIYVKHTGQSLDTIEAXMERDKFMSPEEAKAFGLIDEVVEKRPGSIGDGAA.

Serine 106 (nucleophile) is an active-site residue. Residue histidine 131 is part of the active site.

This sequence belongs to the peptidase S14 family. In terms of assembly, fourteen ClpP subunits assemble into 2 heptameric rings which stack back to back to give a disk-like structure with a central cavity, resembling the structure of eukaryotic proteasomes.

The protein resides in the cytoplasm. It carries out the reaction Hydrolysis of proteins to small peptides in the presence of ATP and magnesium. alpha-casein is the usual test substrate. In the absence of ATP, only oligopeptides shorter than five residues are hydrolyzed (such as succinyl-Leu-Tyr-|-NHMec, and Leu-Tyr-Leu-|-Tyr-Trp, in which cleavage of the -Tyr-|-Leu- and -Tyr-|-Trp bonds also occurs).. Its function is as follows. Cleaves peptides in various proteins in a process that requires ATP hydrolysis. Has a chymotrypsin-like activity. Plays a major role in the degradation of misfolded proteins. The chain is ATP-dependent Clp protease proteolytic subunit from Azospirillum brasilense.